The chain runs to 286 residues: Ribosomal RNA small subunit methyltransferase H (286 aa).

Residues 17-19, aspartate 36, phenylalanine 63, aspartate 84, and glutamine 91 contribute to the S-adenosyl-L-methionine site; that span reads AGH.

Belongs to the methyltransferase superfamily. RsmH family.

The protein localises to the cytoplasm. It catalyses the reaction cytidine(1402) in 16S rRNA + S-adenosyl-L-methionine = N(4)-methylcytidine(1402) in 16S rRNA + S-adenosyl-L-homocysteine + H(+). In terms of biological role, specifically methylates the N4 position of cytidine in position 1402 (C1402) of 16S rRNA. In Metamycoplasma arthritidis (strain 158L3-1) (Mycoplasma arthritidis), this protein is Ribosomal RNA small subunit methyltransferase H.